The following is a 136-amino-acid chain: DNA-directed RNA polymerase subunit omega (136 aa).

A disordered region spans residues 81–136 (EAEAVPLLSSSPAAAAVAPQSSGDDGDIQFDRMSEEDLLRGLENLAPPTETEDEGD). Low complexity predominate over residues 83–99 (EAVPLLSSSPAAAAVAP). Positions 109 to 120 (QFDRMSEEDLLR) are enriched in basic and acidic residues.

This sequence belongs to the RNA polymerase subunit omega family. As to quaternary structure, the RNAP catalytic core consists of 2 alpha, 1 beta, 1 beta' and 1 omega subunit. When a sigma factor is associated with the core the holoenzyme is formed, which can initiate transcription.

It catalyses the reaction RNA(n) + a ribonucleoside 5'-triphosphate = RNA(n+1) + diphosphate. In terms of biological role, promotes RNA polymerase assembly. Latches the N- and C-terminal regions of the beta' subunit thereby facilitating its interaction with the beta and alpha subunits. The chain is DNA-directed RNA polymerase subunit omega from Methylobacterium nodulans (strain LMG 21967 / CNCM I-2342 / ORS 2060).